A 445-amino-acid polypeptide reads, in one-letter code: UPF0210 protein SPP_0289 (445 aa).

The protein belongs to the UPF0210 family. In terms of assembly, homodimer.

The protein is UPF0210 protein SPP_0289 of Streptococcus pneumoniae (strain P1031).